Reading from the N-terminus, the 514-residue chain is Exoglucanase 1 (514 aa).

An N-terminal signal peptide occupies residues 1-17; it reads MYRKLAVISAFLATARA. Residue glutamine 18 is modified to Pyrrolidone carboxylic acid. A catalytic region spans residues 18–453; that stretch reads QSACTLQSET…GSTGNPSGGN (436 aa). 10 disulfide bridges follow: cysteine 21-cysteine 89, cysteine 36-cysteine 42, cysteine 67-cysteine 88, cysteine 78-cysteine 84, cysteine 155-cysteine 414, cysteine 189-cysteine 227, cysteine 193-cysteine 226, cysteine 247-cysteine 273, cysteine 255-cysteine 260, and cysteine 278-cysteine 348. Asparagine 62 is a glycosylation site (N-linked (GlcNAc) asparagine). Catalysis depends on glutamate 229, which acts as the Nucleophile. Glutamate 234 (proton donor/acceptor) is an active-site residue. An N-linked (GlcNAc...) (high mannose) asparagine glycan is attached at asparagine 287. An N-linked (GlcNAc) asparagine glycan is attached at asparagine 401. The span at 401 to 437 shows a compositional bias: polar residues; the sequence is NETSSTPGAVRGSCSTSSGVPAQVESQSPNAKVTFSN. A disordered region spans residues 401 to 481; that stretch reads NETSSTPGAV…TGSSPGPTQS (81 aa). Positions 454–478 are linker; the sequence is PPGGNPPGTTTTRRPATTTGSSPGP. Low complexity predominate over residues 460 to 479; sequence PGTTTTRRPATTTGSSPGPT. O-linked (Man) threonine glycosylation is present at threonine 462. O-linked (Man...) threonine glycosylation is found at threonine 463, threonine 464, and threonine 465. An O-linked (Man) threonine glycan is attached at threonine 470. O-linked (Man...) threonine glycans are attached at residues threonine 471 and threonine 472. 2 O-linked (Man) serine glycosylation sites follow: serine 474 and serine 475. Residues 478–514 enclose the CBM1 domain; sequence PTQSHYGQCGGIGYSGPTVCASGTTCQVLNPYYSQCL. An O-linked (Man) threonine glycan is attached at threonine 479. O-linked (Man) serine glycosylation is found at serine 481 and serine 492. Disulfide bonds link cysteine 486-cysteine 503 and cysteine 497-cysteine 513.

Belongs to the glycosyl hydrolase 7 (cellulase C) family. Post-translationally, N-glycosylated. A high mannose glycan is attached to Asn-287 (predominantly Man(8)GlcNAc(2)) and single GlcNAc occupancy is observed at Asn-62 and Asn-401 with some site heterogeneity depending on strains and fermentation conditions. In terms of processing, O-glycosylated. Within the linker domain, all 8 threonines are variably glycosylated with between at least one, and up to three, mannose residues per site. All serines in this domain are at least partially glycosylated with a single mannose residue. O-glycosylation of the cellulase linker provides protection from proteolysis. Linker glycans also contribute to binding affinity of cellobiohydrolases to cellulose.

Its subcellular location is the secreted. It carries out the reaction Hydrolysis of (1-&gt;4)-beta-D-glucosidic linkages in cellulose and cellotetraose, releasing cellobiose from the non-reducing ends of the chains.. Exocellobiohydrolases (CBH) that catalyzes the hydrolysis of 1,4-beta-D-glucosidic bonds in cellulose to release the disaccharide cellobiose. The degradation of cellulose involves an interplay between different cellulolytic enzymes. Hydrolysis starts with endoglucanases (EGs), which cut internal beta-1,4-glucosidic bonds in cellulose to reduce the polymerization degree of the substrate and create new chain ends for exocellobiohydrolases (CBHs). The CBHs release the disaccharide cellobiose from the non-reducing end of the cellulose polymer chain. Finally, beta-1,4-glucosidases hydrolyze the cellobiose and other short cello-oligosaccharides into glucose units. In Hypocrea jecorina (strain ATCC 56765 / BCRC 32924 / NRRL 11460 / Rut C-30) (Trichoderma reesei), this protein is Exoglucanase 1 (cbh1).